A 428-amino-acid chain; its full sequence is MLDPKFLRNELEVTAERLATRGFILDVERLGKLEDKRKSLQVATEELQASRNAISKSIGQAKAKGEDVAPIMAQVGSLGEELDAKKAELASLLDELNSIAMSVPNLPDESAPIGADESENVEVRRWGTPKEYDFEVKDHVELGENIGGLDFKNAVKITGSRFIVMKGQIARMHRALAQFMLDLHTTEHGYTEAYVPLLVNEDSLMGTGQLPKFGEDLFHTKPATEEGQGLSLIPTAEVPLTNLVRDTIVDEEELPIKLTAHTPCFRSEAGSYGRDTRGLIRQHQFDKVELVQLVKPENSMQALEELTAHAETVLQKLGLPYRTVVLCTGDMGFGSSKTYDIEVWLPAQNTFREISSCSNMQDFQARRMQARYKAKTDKKPSLLHTLNGSGLAVGRTLVAVIENYQNADGSITVPEALRGYMGGLEKIG.

235–237 provides a ligand contact to L-serine; that stretch reads TAE. Residue 266–268 coordinates ATP; that stretch reads RSE. L-serine is bound at residue glutamate 289. 353–356 contacts ATP; it reads EISS. Serine 389 is a binding site for L-serine.

Belongs to the class-II aminoacyl-tRNA synthetase family. Type-1 seryl-tRNA synthetase subfamily. Homodimer. The tRNA molecule binds across the dimer.

It localises to the cytoplasm. The enzyme catalyses tRNA(Ser) + L-serine + ATP = L-seryl-tRNA(Ser) + AMP + diphosphate + H(+). It carries out the reaction tRNA(Sec) + L-serine + ATP = L-seryl-tRNA(Sec) + AMP + diphosphate + H(+). Its pathway is aminoacyl-tRNA biosynthesis; selenocysteinyl-tRNA(Sec) biosynthesis; L-seryl-tRNA(Sec) from L-serine and tRNA(Sec): step 1/1. Its function is as follows. Catalyzes the attachment of serine to tRNA(Ser). Is also able to aminoacylate tRNA(Sec) with serine, to form the misacylated tRNA L-seryl-tRNA(Sec), which will be further converted into selenocysteinyl-tRNA(Sec). The chain is Serine--tRNA ligase from Shewanella halifaxensis (strain HAW-EB4).